The following is a 243-amino-acid chain: Anti-sigma-K factor RskA (243 aa).

At 1–102 the chain is on the cytoplasmic side; the sequence is MTEPNNTDLL…RGGESRWRTA (102 aa). Residues 103-123 traverse the membrane as a helical segment; that stretch reads VLAAAAVAVVGLGALGVGLAL. The Extracellular portion of the chain corresponds to 124–243; the sequence is RPAVSPTTAD…SPAFAELPLT (120 aa). The tract at residues 223-243 is disordered; sequence VEPPGGSQRPTSPAFAELPLT.

Belongs to the anti-sigma-K factor family.

It localises to the cell membrane. In terms of biological role, an anti-sigma factor for extracytoplasmic function (ECF) sigma factor SigK. ECF sigma factors are held in an inactive form by an anti-sigma factor until released by regulated intramembrane proteolysis (RIP). RIP occurs when an extracytoplasmic signal triggers a concerted proteolytic cascade to transmit information and elicit cellular responses. The membrane-spanning regulatory substrate protein is first cut extracytoplasmically (site-1 protease, S1P), then within the membrane itself (site-2 protease, S2P, Rip1), while cytoplasmic proteases finish degrading the regulatory protein, liberating the sigma factor. The chain is Anti-sigma-K factor RskA (rskA) from Mycobacterium sp. (strain JLS).